The sequence spans 337 residues: MIPWLLTACIYPCVIGPDFWGLLHGDWRMCTAGQMQSPVNIDPSQLLYDPHLMPINIEGNIVEAVFENTGQLPVVTVKDLPNRPTINITGGPTMPYRYKLHQISVHFGRADEGEKGSEHTVDRVRFPAEIQLLAYNSALYPNFSVAMTSPRGLLAVSVIVDIGKTTSVELRRLTVASQSINYKGQTTNLTDFQPSALLPKTSHYVTYEGSLTFPGCHETVTWVILNNPIYITNDDLQIWNEMQKTETKQPEPSYMTPAYRPLKSLNGRLVRTNINVGSKQSTVSSSCPSNVYVEMGYQANPGRNKRNDSVSRRYVPTSEVFEIDSIRPDDVSKAGSF.

The first 16 residues, 1–16 (MIPWLLTACIYPCVIG), serve as a signal peptide directing secretion. Residues 17 to 274 (PDFWGLLHGD…LNGRLVRTNI (258 aa)) form the Alpha-carbonic anhydrase domain. Tyrosine 140 is a catalytic residue. Asparagine 188 carries N-linked (GlcNAc...) asparagine glycosylation. Residue 212-213 (TF) coordinates substrate.

It belongs to the alpha-carbonic anhydrase family.

It localises to the secreted. In Caenorhabditis elegans, this protein is Putative carbonic anhydrase-like protein 2 (cah-2).